A 1722-amino-acid polypeptide reads, in one-letter code: Leucine-rich repeat- and IQ domain-containing protein 1 (1722 aa).

Disordered stretches follow at residues 23-47 (SLEK…TDSV), 182-202 (EDKE…QFQE), 265-285 (RTRF…QQNN), and 319-367 (QEWK…YEEK). Residues 38-47 (QSDDSDTDSV) show a composition bias toward acidic residues. Residues 265 to 278 (RTRFKDQQEKEKNS) are compositionally biased toward basic and acidic residues. The region spanning 283–312 (QNNAAVKIQAKYKAFVAYQKYGPIIKEQIE) is the IQ 1 domain. LRR repeat units follow at residues 819-840 (NLQF…SNCK), 841-861 (KLKY…ENLE), 862-883 (NLCV…DGCT), 884-905 (NIQC…FFLE), 970-991 (NLQQ…CDTP), 992-1013 (TIVY…ENCG), 1014-1035 (LLQI…ENLV), 1036-1057 (LLRE…SSYW), 1060-1081 (LLQN…FHFV), and 1082-1103 (SLEK…IKWF). Residues 1117–1157 (NPLLQETNWRDSLLKVLPALRILNGNILNSNSESRTEEHNQ) enclose the LRRCT domain. IQ domains lie at 1335–1364 (KIMA…LHTA) and 1395–1424 (REKA…AIKN). Positions 1506 to 1524 (SEHTQFNSRSENKTSSWTP) are enriched in polar residues. The segment at 1506-1534 (SEHTQFNSRSENKTSSWTPESKTSRKSLL) is disordered.

The chain is Leucine-rich repeat- and IQ domain-containing protein 1 (LRRIQ1) from Homo sapiens (Human).